The chain runs to 169 residues: Myosin regulatory light chain 2, skeletal muscle isoform A (169 aa).

Ser-21 is subject to Phosphoserine. EF-hand domains are found at residues 26-61 (SQIQEYKEAFTIIDQNRDGIISKDDLRDVLASMGQL), 96-131 (DPEDVIVSAFKVLDPEGTGSIKKEFLEELLTTQCDR), and 132-167 (FTAEEMKNLWAAFPPDVAGNVDYKNICYVITHGEEK). The Ca(2+) site is built by Asp-39, Asn-41, Asp-43, and Asp-50.

In terms of assembly, myosin is a hexamer of 2 heavy chains and 4 light chains. Interacts with nanos3; the interaction negatively regulates mylpfa phosphorylation.

In terms of biological role, myosin regulatory subunit that plays a role to maintain muscle integrity during early development. Plays a role in muscle contraction. In Danio rerio (Zebrafish), this protein is Myosin regulatory light chain 2, skeletal muscle isoform A (mylpfa).